The sequence spans 263 residues: Small ribosomal subunit protein eS4, Y isoform 1 (263 aa).

The 63-residue stretch at 42-104 (LPLIIFLRNR…TGEHFRLVYD (63 aa)) folds into the S4 RNA-binding domain.

Belongs to the eukaryotic ribosomal protein eS4 family.

The sequence is that of Small ribosomal subunit protein eS4, Y isoform 1 (RPS4Y1) from Macaca fuscata fuscata (Japanese macaque).